The primary structure comprises 1059 residues: DNA-directed RNA polymerase subunit beta (1059 aa).

The protein belongs to the RNA polymerase beta chain family. In plastids the minimal PEP RNA polymerase catalytic core is composed of four subunits: alpha, beta, beta', and beta''. When a (nuclear-encoded) sigma factor is associated with the core the holoenzyme is formed, which can initiate transcription (Potential).

It is found in the plastid. It localises to the apicoplast. The catalysed reaction is RNA(n) + a ribonucleoside 5'-triphosphate = RNA(n+1) + diphosphate. DNA-dependent RNA polymerase catalyzes the transcription of DNA into RNA using the four ribonucleoside triphosphates as substrates. The sequence is that of DNA-directed RNA polymerase subunit beta (rpoB) from Eimeria tenella (Coccidian parasite).